A 333-amino-acid chain; its full sequence is FAD-dependent monooxygenase pytG (333 aa).

The helical transmembrane segment at leucine 6 to phenylalanine 26 threads the bilayer. FAD-binding residues include glutamate 38 and arginine 109. N-linked (GlcNAc...) asparagine glycosylation occurs at asparagine 303.

This sequence belongs to the paxM FAD-dependent monooxygenase family. FAD serves as cofactor.

The protein localises to the membrane. It functions in the pathway secondary metabolite biosynthesis. In terms of biological role, FAD-dependent monooxygenase; part of the gene cluster that mediates the biosynthesis of pyranterreones, a family of antioxidative compounds. The first step of pyranonigrins biosynthesis is performed by the hybrid PKS-NRPS synthetase pytA that condenses 4 malonyl-CoA units ato the acetyl starter unit by the modular PKS of pytA. The acyl chain is then connected to an L-serine through the amide bond by the modular NRPS of pytA. A tetramic acid is formed and released from the PKS-NRPS pytA to give pyranterreone 5 with the help of the thioesterase pytI. Pyranterreone 5 could be methylated by pytC to afford pyranterreone 6. Both pyranterreones 5 and 6 are subsequently oxidized by the FAD-linked oxidoreductase pytB and the cytochrome P450 monooxygenase pytD to form the fused gamma-pyrone core, resulting in pyranterreones 7 and 11, respectively. The hydroxy group at C-8 of pyranterreones 7 and 11 are dehydrated by the aspartyl protease pytH to form a delta-7 double bond to give pyranterreones 3 and 1, 2 accordingly. The exo-methylene of pyranterreone 3 could be reduced into a pendant methyl by reductase pytE to provide pyranterreone 4, also known as cordylactam. Pyranterreone 4 can be reconverted to pyranterreone 3 through pytB-catalyzed dehydrogenation or further oxidized to pyranterreones 9 and 10. The sequence is that of FAD-dependent monooxygenase pytG from Aspergillus terreus (strain NIH 2624 / FGSC A1156).